Here is a 414-residue protein sequence, read N- to C-terminus: GLABROUS1 enhancer-binding protein-like 3 (414 aa).

Disordered stretches follow at residues 36-57 (QLRT…LSSS) and 167-191 (QAKD…DRDV). The segment covering 38–50 (RTTTTRTTTTRTT) has biased composition (low complexity). Residues 382 to 403 (LINEWKALFVDEQRLCVKKLTF) form a non-canonical leucine-zipper region.

The protein belongs to the GeBP family. In terms of assembly, homo- and heterodimers. Interacts with GEBP, GPL1 and GPL2. Interacts with GEBP. As to expression, expressed in the apical meristem and young leaf primordia. Detected in the vascular tissues of rosette leaves, in primary and secondary roots and at the base of flowers and siliques.

It localises to the nucleus. Its function is as follows. Probable transcription factor. Involved in stress responses. Plays a repressive role in cell expansion by counteracting the positive role of CPR5 in this process, but does not regulate cell proliferation or endoreduplication. The chain is GLABROUS1 enhancer-binding protein-like 3 from Arabidopsis thaliana (Mouse-ear cress).